The following is a 338-amino-acid chain: 1-aminocyclopropane-1-carboxylate deaminase (338 aa).

Lys-51 carries the post-translational modification N6-(pyridoxal phosphate)lysine. Ser-78 acts as the Nucleophile in catalysis.

Belongs to the ACC deaminase/D-cysteine desulfhydrase family. Requires pyridoxal 5'-phosphate as cofactor.

The catalysed reaction is 1-aminocyclopropane-1-carboxylate + H2O = 2-oxobutanoate + NH4(+). Its function is as follows. Catalyzes a cyclopropane ring-opening reaction, the irreversible conversion of 1-aminocyclopropane-1-carboxylate (ACC) to ammonia and alpha-ketobutyrate. Allows growth on ACC as a nitrogen source. This chain is 1-aminocyclopropane-1-carboxylate deaminase, found in Enterobacter cloacae.